Here is a 173-residue protein sequence, read N- to C-terminus: Archaemetzincin (173 aa).

H130 is a binding site for Zn(2+). The active-site Proton acceptor is E131. H134, H140, C141, C146, C165, and C168 together coordinate Zn(2+).

It belongs to the peptidase M54 family. As to quaternary structure, monomer. The cofactor is Zn(2+).

In terms of biological role, probable zinc metalloprotease whose natural substrate is unknown. The chain is Archaemetzincin from Halobacterium salinarum (strain ATCC 29341 / DSM 671 / R1).